A 360-amino-acid polypeptide reads, in one-letter code: Probable dual-specificity RNA methyltransferase RlmN (360 aa).

The active-site Proton acceptor is the glutamate 103. The Radical SAM core domain occupies 109–342 (HEYGNSVCVT…VTIRREQGHD (234 aa)). Cysteine 116 and cysteine 347 are oxidised to a cystine. Residues cysteine 123, cysteine 127, and cysteine 130 each coordinate [4Fe-4S] cluster. S-adenosyl-L-methionine contacts are provided by residues 173–174 (GE), serine 205, 228–230 (SLH), and asparagine 304. The S-methylcysteine intermediate role is filled by cysteine 347.

It belongs to the radical SAM superfamily. RlmN family. The cofactor is [4Fe-4S] cluster.

The protein localises to the cytoplasm. The catalysed reaction is adenosine(2503) in 23S rRNA + 2 reduced [2Fe-2S]-[ferredoxin] + 2 S-adenosyl-L-methionine = 2-methyladenosine(2503) in 23S rRNA + 5'-deoxyadenosine + L-methionine + 2 oxidized [2Fe-2S]-[ferredoxin] + S-adenosyl-L-homocysteine. It catalyses the reaction adenosine(37) in tRNA + 2 reduced [2Fe-2S]-[ferredoxin] + 2 S-adenosyl-L-methionine = 2-methyladenosine(37) in tRNA + 5'-deoxyadenosine + L-methionine + 2 oxidized [2Fe-2S]-[ferredoxin] + S-adenosyl-L-homocysteine. In terms of biological role, specifically methylates position 2 of adenine 2503 in 23S rRNA and position 2 of adenine 37 in tRNAs. The chain is Probable dual-specificity RNA methyltransferase RlmN from Bacillus pumilus (strain SAFR-032).